A 355-amino-acid chain; its full sequence is MLIDKLKPIVARYDEISSLLSSESVLSNIKQLTELSKEQSDIESIAQNAKTYFSILENIVQNKALLEDKELGELAKEELKDLESAKATLEEEIKLLLIPKDPNDNKNIYLEIRAGTGGDEAGIFVGDLFKAYCRYADLQKWKVEIISSNENNVGGYKEVIALVKGNGAYSKLKFEGGTHRVQRVPETESQGRIHTSAITVAIMPEVDDVEININPNDLKIDVFRSGGHGGQSVNTTDSAVRITHIPTGISVSMQDEKSQHKNKDKALKILKARLYEAELEAQNAQNKEARKTQVGSGDRSERIRTYNYPQNRLTDHRIGLTLYSLEEIMLGGLLDEFINPLIAHAQSQAMGNIEQ.

Gln-231 bears the N5-methylglutamine mark. The segment at 283 to 303 is disordered; the sequence is NAQNKEARKTQVGSGDRSERI.

This sequence belongs to the prokaryotic/mitochondrial release factor family. In terms of processing, methylated by PrmC. Methylation increases the termination efficiency of RF1.

Its subcellular location is the cytoplasm. Peptide chain release factor 1 directs the termination of translation in response to the peptide chain termination codons UAG and UAA. This Helicobacter hepaticus (strain ATCC 51449 / 3B1) protein is Peptide chain release factor 1.